The chain runs to 142 residues: Hemoglobin subunit alpha-A (142 aa).

A Globin domain is found at 2-142 (VLSAADKNNV…VGTVLTAKYR (141 aa)). O2 is bound at residue His59. His88 provides a ligand contact to heme b.

It belongs to the globin family. Heterotetramer of two alpha chains and two beta chains. In terms of tissue distribution, red blood cells.

In terms of biological role, involved in oxygen transport from the lung to the various peripheral tissues. The chain is Hemoglobin subunit alpha-A (HBAA) from Gallus gallus (Chicken).